A 305-amino-acid chain; its full sequence is Putative lipid kinase SaurJH9_0749 (305 aa).

The 137-residue stretch at 3–139 (NKYTHGVLFY…YDVIKINNQY (137 aa)) folds into the DAGKc domain. Residues S44, 74-80 (GDGTVNE), and T101 contribute to the ATP site. The Mg(2+) site is built by S220, D223, and E225. The active-site Proton acceptor is E281.

This sequence belongs to the diacylglycerol/lipid kinase family. Mg(2+) is required as a cofactor.

Its function is as follows. May catalyze the ATP-dependent phosphorylation of lipids other than diacylglycerol (DAG). The sequence is that of Putative lipid kinase SaurJH9_0749 from Staphylococcus aureus (strain JH9).